We begin with the raw amino-acid sequence, 905 residues long: Protein HID1 (905 aa).

Residues 139–191 (TKTTEIIEEQEKKDQENKQVEENKENEEKKDEEKKDEEKKDEEKKDEDKKENK) adopt a coiled-coil conformation. A compositionally biased stretch (basic and acidic residues) spans 147-191 (EQEKKDQENKQVEENKENEEKKDEEKKDEEKKDEEKKDEDKKENK). Disordered stretches follow at residues 147–217 (EQEK…SSFD), 381–404 (DQQPQQQHHHHQQQHHQQQQQQQQ), and 690–793 (SISE…KTQM). 2 stretches are compositionally biased toward low complexity: residues 192-210 (TTTTTTTTNTTNNTNNNNN) and 395-404 (HHQQQQQQQQ). Residues 690-700 (SISEEPSTLSN) show a composition bias toward polar residues. A compositionally biased stretch (basic and acidic residues) spans 701–718 (EKSDKTTDGGDHQDESIS). A compositionally biased stretch (polar residues) spans 719–760 (KSKVQSKPTTEHPNSTGATPSSTNSGTPTIKAFSSTTPNQES).

It belongs to the hid-1 family.

The sequence is that of Protein HID1 (hid1) from Dictyostelium discoideum (Social amoeba).